Reading from the N-terminus, the 328-residue chain is Phosphate acyltransferase (328 aa).

This sequence belongs to the PlsX family. In terms of assembly, homodimer. Probably interacts with PlsY.

Its subcellular location is the cytoplasm. It carries out the reaction a fatty acyl-[ACP] + phosphate = an acyl phosphate + holo-[ACP]. It functions in the pathway lipid metabolism; phospholipid metabolism. Its function is as follows. Catalyzes the reversible formation of acyl-phosphate (acyl-PO(4)) from acyl-[acyl-carrier-protein] (acyl-ACP). This enzyme utilizes acyl-ACP as fatty acyl donor, but not acyl-CoA. This chain is Phosphate acyltransferase, found in Campylobacter jejuni subsp. jejuni serotype O:6 (strain 81116 / NCTC 11828).